The chain runs to 181 residues: Ribonuclease HII (181 aa).

The RNase H type-2 domain occupies 1–181; it reads MICGIDEVGR…SLHRKNFKLI (181 aa). D6, E7, and D98 together coordinate a divalent metal cation.

This sequence belongs to the RNase HII family. It depends on Mn(2+) as a cofactor. Requires Mg(2+) as cofactor.

It is found in the cytoplasm. The catalysed reaction is Endonucleolytic cleavage to 5'-phosphomonoester.. Endonuclease that specifically degrades the RNA of RNA-DNA hybrids. This Borreliella burgdorferi (strain ZS7) (Borrelia burgdorferi) protein is Ribonuclease HII.